Reading from the N-terminus, the 330-residue chain is Aspartate--ammonia ligase (330 aa).

This sequence belongs to the class-II aminoacyl-tRNA synthetase family. AsnA subfamily.

Its subcellular location is the cytoplasm. The enzyme catalyses L-aspartate + NH4(+) + ATP = L-asparagine + AMP + diphosphate + H(+). Its pathway is amino-acid biosynthesis; L-asparagine biosynthesis; L-asparagine from L-aspartate (ammonia route): step 1/1. The chain is Aspartate--ammonia ligase from Escherichia coli O8 (strain IAI1).